The primary structure comprises 324 residues: Mevalonate-3-kinase (324 aa).

Leucine 19 serves as a coordination point for substrate. 109–112 lines the ATP pocket; it reads SGSS. The substrate site is built by glutamate 145 and arginine 149. ATP-binding residues include arginine 190 and serine 193.

The protein belongs to the GHMP kinase family. As to quaternary structure, homodimer.

It catalyses the reaction (R)-mevalonate + ATP = (R)-3-phosphomevalonate + ADP + H(+). It functions in the pathway isoprenoid biosynthesis; isopentenyl diphosphate biosynthesis via mevalonate pathway. In terms of biological role, catalyzes the phosphorylation of mevalonate (MVA) to yield mevalonate-3-phosphate. Functions in an alternative mevalonate pathway, which passes through mevalonate 3-phosphate rather than mevalonate 5-phosphate. Also able to catalyze the formation of isobutene via the conversion of 3-hydroxyisovalerate (3-HIV) to an unstable 3-phosphate intermediate that undergoes a spontaneous decarboxylation. In Picrophilus torridus (strain ATCC 700027 / DSM 9790 / JCM 10055 / NBRC 100828 / KAW 2/3), this protein is Mevalonate-3-kinase.